Reading from the N-terminus, the 39-residue chain is Gonadal protein gdl-ORF39 (39 aa).

In bundles of maturing sperm of larval, pupal and adult males.

The sequence is that of Gonadal protein gdl-ORF39 (gdl-ORF39) from Drosophila melanogaster (Fruit fly).